A 435-amino-acid polypeptide reads, in one-letter code: Xylose isomerase (435 aa).

Mg(2+) is bound by residues aspartate 306 and aspartate 308.

This sequence belongs to the xylose isomerase family. Homotetramer. Mg(2+) serves as cofactor.

It is found in the cytoplasm. It catalyses the reaction alpha-D-xylose = alpha-D-xylulofuranose. The polypeptide is Xylose isomerase (Brucella melitensis biotype 2 (strain ATCC 23457)).